Here is a 500-residue protein sequence, read N- to C-terminus: Cytochrome P450 2D26 (500 aa).

Ser-249 carries the post-translational modification Phosphoserine. Residue Cys-446 participates in heme binding.

The protein belongs to the cytochrome P450 family. Heme serves as cofactor.

The protein localises to the endoplasmic reticulum membrane. It localises to the microsome membrane. The enzyme catalyses an organic molecule + reduced [NADPH--hemoprotein reductase] + O2 = an alcohol + oxidized [NADPH--hemoprotein reductase] + H2O + H(+). Its function is as follows. Cytochromes P450 are a group of heme-thiolate monooxygenases. In liver microsomes, this enzyme is involved in an NADPH-dependent electron transport pathway. It oxidizes a variety of structurally unrelated compounds, including steroids, fatty acids, and xenobiotics. The polypeptide is Cytochrome P450 2D26 (Mus musculus (Mouse)).